The following is a 150-amino-acid chain: Endoribonuclease YbeY (150 aa).

Positions 102, 106, and 112 each coordinate Zn(2+).

The protein belongs to the endoribonuclease YbeY family. Requires Zn(2+) as cofactor.

The protein resides in the cytoplasm. In terms of biological role, single strand-specific metallo-endoribonuclease involved in late-stage 70S ribosome quality control and in maturation of the 3' terminus of the 16S rRNA. This Thermotoga maritima (strain ATCC 43589 / DSM 3109 / JCM 10099 / NBRC 100826 / MSB8) protein is Endoribonuclease YbeY.